The primary structure comprises 107 residues: Snaclec VP12 subunit A (107 aa).

Disulfide bonds link Cys-4–Cys-15 and Cys-32–Cys-107. Residues 11–107 form the C-type lectin domain; the sequence is YEGNCYKAFD…ECGLAYPFIC (97 aa).

The protein belongs to the snaclec family. In terms of assembly, heterodimer of subunits alpha and beta; disulfide-linked. Expressed by the venom gland.

The protein localises to the secreted. Inhibits integrin alpha-2/beta-1- (ITGA2/ITGB1) dependent melanoma metastasis. The sequence is that of Snaclec VP12 subunit A from Daboia palaestinae (Palestine viper).